The chain runs to 672 residues: Hydrogenase-4 component B (672 aa).

The Periplasmic portion of the chain corresponds to 1-5 (MDALQ). Residues 6 to 26 (LLTWSLILYLFASLASLFLLG) form a helical membrane-spanning segment. Topologically, residues 27–30 (LDRL) are cytoplasmic. The helical transmembrane segment at 31 to 51 (AIKLSGITSLVGGVIGIISGI) threads the bilayer. Topologically, residues 52–79 (TQLHAGVTLVARFAPPFEFADLTLRMDS) are periplasmic. The helical transmembrane segment at 80–100 (LSAFMVLVISLLVVVCSLYSL) threads the bilayer. Over 101-119 (TYMREYEGKGAAAMGFFMN) the chain is Cytoplasmic. The chain crosses the membrane as a helical span at residues 120–140 (IFIASMVALLVMDNAFWFIVL). The Periplasmic portion of the chain corresponds to 141 to 164 (FEMMSLSSWFLVIARQDKTSINAG). Residues 165 to 185 (MLYFFIAHAGSVLIMIAFLLM) form a helical membrane-spanning segment. The Cytoplasmic segment spans residues 186 to 199 (GRESGSLDFASFRT). A helical membrane pass occupies residues 200–220 (LSLSPGLASAVFLLAFFGFGA). At 221–242 (KAGMMPLHSWLPRAHPAAPSHA) the chain is on the periplasmic side. The chain crosses the membrane as a helical span at residues 243 to 263 (SALMSGVMVKIGIFGILKVAM). Residues 264–272 (DLLAQTGLP) lie on the Cytoplasmic side of the membrane. Residues 273–293 (LWWGILVMAIGAISALLGVLY) traverse the membrane as a helical segment. Over 294 to 311 (ALAEQDIKRLLAWSTVEN) the chain is Periplasmic. A helical transmembrane segment spans residues 312–332 (VGIILLAVGVAMVGLSLHDPL). Residues 333 to 342 (LTVVGLLGAL) lie on the Cytoplasmic side of the membrane. Residues 343-363 (FHLLNHALFKGLLFLGAGAII) traverse the membrane as a helical segment. At 364-384 (SRLHTHDMEKMGALAKRMPWT) the chain is on the periplasmic side. Residues 385 to 405 (AAACLIGCLAISAIPPLNGFI) form a helical membrane-spanning segment. At 406 to 427 (SEWYTWQSLFSLSRVEAVALQL) the chain is on the cytoplasmic side. The helical transmembrane segment at 428 to 448 (AGPIAMVMLAVTGGLAVMCFV) threads the bilayer. The Periplasmic segment spans residues 449-474 (KMYGITFCGAPRSTHAEEAQEVPNTM). Residues 475 to 495 (IVAMLLLAALCVLIALSASWL) traverse the membrane as a helical segment. Over 496–504 (APKIMHIAH) the chain is Cytoplasmic. The helical transmembrane segment at 505–525 (AFTNTPPATVASGIALVPGTF) threads the bilayer. The Periplasmic segment spans residues 526 to 531 (HTQVTP). A helical membrane pass occupies residues 532–552 (SLLLLLLLAMPLLPGLYWLWC). The Cytoplasmic segment spans residues 553-651 (RSRRAAFRRT…KEIQHLQSGD (99 aa)). The chain crosses the membrane as a helical span at residues 652 to 672 (FRLYCLYVVAALVVLLIAIAV).

This sequence belongs to the complex I subunit 5 family.

It localises to the cell inner membrane. Possible component of hydrogenase 4. The chain is Hydrogenase-4 component B from Escherichia coli (strain K12).